We begin with the raw amino-acid sequence, 2357 residues long: Myosin-I heavy chain (2357 aa).

The Myosin motor domain maps to 13–688 (QPVEDMITLP…QYLKLEELRK (676 aa)). Residue 106–113 (GESGAGKT) participates in ATP binding. The segment at 579–586 (YVRCIKPN) is actin-binding. In terms of domain architecture, IQ spans 691-720 (LLKKVTLIQSVWRMYRCKKRYQQIRASAKI). Residues 787-891 (KRDRNARMLE…QDKNINELDD (105 aa)) adopt a coiled-coil conformation. The segment at 787-1076 (KRDRNARMLE…PILGAPPPPP (290 aa)) is binding to talin A. Disordered regions lie at residues 797 to 852 (IQRE…EEEL) and 974 to 1112 (ASSF…NPQP). Low complexity-rich tracts occupy residues 1003–1025 (NNNY…SDFS) and 1078–1106 (TSDS…QSTN). One can recognise a MyTH4 1 domain in the interval 1155-1313 (YQKSHIKSSL…PSVTELESIK (159 aa)). An FERM 1 domain is found at 1318 to 1620 (IFVRITATDG…EYSLYLRNNA (303 aa)). An SH3 domain is found at 1618–1678 (NNAKYARALK…PVDHVEILLS (61 aa)). A disordered region spans residues 1686–1849 (VHPVATLSPP…PSKRLTVSPA (164 aa)). Over residues 1706–1733 (TPPPPPSISDSMSPPPQVGMLPPPPPPS) the composition is skewed to pro residues. 2 stretches are compositionally biased toward low complexity: residues 1734 to 1746 (VMGS…IPSL) and 1755 to 1770 (SSNS…SPMM). Over residues 1817 to 1828 (FRSSLRVSMLNT) the composition is skewed to polar residues. The region spanning 1894–2051 (FNKDPIKESL…PSATEIQSFR (158 aa)) is the MyTH4 2 domain. The region spanning 2060-2357 (STCKIRFIDQ…ASVYQFYSSQ (298 aa)) is the FERM 2 domain.

The protein belongs to the TRAFAC class myosin-kinesin ATPase superfamily. Myosin family. In terms of assembly, monomer. Interacts with talA.

The protein localises to the cytoplasm. Its function is as follows. Myosins are actin-based motor molecules with ATPase activity. Involved in the early steps of phagocytosis and adhesion. This Dictyostelium discoideum (Social amoeba) protein is Myosin-I heavy chain (myoI).